The primary structure comprises 72 residues: Translation initiation factor IF-1 (72 aa).

An S1-like domain is found at 1-72 (MAKSDVIEVD…DKGRITYRYK (72 aa)).

The protein belongs to the IF-1 family. In terms of assembly, component of the 30S ribosomal translation pre-initiation complex which assembles on the 30S ribosome in the order IF-2 and IF-3, IF-1 and N-formylmethionyl-tRNA(fMet); mRNA recruitment can occur at any time during PIC assembly.

It localises to the cytoplasm. Functionally, one of the essential components for the initiation of protein synthesis. Stabilizes the binding of IF-2 and IF-3 on the 30S subunit to which N-formylmethionyl-tRNA(fMet) subsequently binds. Helps modulate mRNA selection, yielding the 30S pre-initiation complex (PIC). Upon addition of the 50S ribosomal subunit IF-1, IF-2 and IF-3 are released leaving the mature 70S translation initiation complex. The sequence is that of Translation initiation factor IF-1 from Sulfurimonas denitrificans (strain ATCC 33889 / DSM 1251) (Thiomicrospira denitrificans (strain ATCC 33889 / DSM 1251)).